The following is a 111-amino-acid chain: Ribosome-binding factor A (111 aa).

Belongs to the RbfA family. In terms of assembly, monomer. Binds 30S ribosomal subunits, but not 50S ribosomal subunits or 70S ribosomes.

It localises to the cytoplasm. Its function is as follows. One of several proteins that assist in the late maturation steps of the functional core of the 30S ribosomal subunit. Associates with free 30S ribosomal subunits (but not with 30S subunits that are part of 70S ribosomes or polysomes). Required for efficient processing of 16S rRNA. May interact with the 5'-terminal helix region of 16S rRNA. The chain is Ribosome-binding factor A from Helicobacter pylori (strain ATCC 700392 / 26695) (Campylobacter pylori).